The sequence spans 433 residues: Eukaryotic translation initiation factor 3 subunit E (433 aa).

The PCI domain maps to 217-390 (FFNHGKGRDL…GHVVMGTQPL (174 aa)).

This sequence belongs to the eIF-3 subunit E family. Component of the eukaryotic translation initiation factor 3 (eIF-3) complex.

It localises to the cytoplasm. Functionally, component of the eukaryotic translation initiation factor 3 (eIF-3) complex, which is involved in protein synthesis of a specialized repertoire of mRNAs and, together with other initiation factors, stimulates binding of mRNA and methionyl-tRNAi to the 40S ribosome. The eIF-3 complex specifically targets and initiates translation of a subset of mRNAs involved in cell proliferation. The polypeptide is Eukaryotic translation initiation factor 3 subunit E (eIF3-S6) (Anopheles gambiae (African malaria mosquito)).